The sequence spans 249 residues: Small ribosomal subunit protein uS4m (249 aa).

Residues 133 to 193 enclose the S4 RNA-binding domain; that stretch reads RRLDIIIYRA…PEIVNLLRNQ (61 aa).

This sequence belongs to the universal ribosomal protein uS4 family.

Its subcellular location is the mitochondrion. The protein is Small ribosomal subunit protein uS4m (RPS4) of Reclinomonas americana.